A 130-amino-acid polypeptide reads, in one-letter code: Small ribosomal subunit protein uS8 (130 aa).

The protein belongs to the universal ribosomal protein uS8 family.

The protein is Small ribosomal subunit protein uS8 (RPS22A) of Eremothecium gossypii (strain ATCC 10895 / CBS 109.51 / FGSC 9923 / NRRL Y-1056) (Yeast).